A 376-amino-acid polypeptide reads, in one-letter code: Zinc transporter 7 (376 aa).

Topologically, residues 1-37 (MLPLSIKDDEYKPPKFNLFRKISGWFRSILSDKTSRN) are cytoplasmic. A helical transmembrane segment spans residues 38–58 (LFFFLCLNLSFAFVELLYGIW). Residues 59–67 (SNCLGLISD) lie on the Lumenal side of the membrane. A helical transmembrane segment spans residues 68–88 (SFHMFFDSTAILAGLAASVIS). Over 89–102 (KWRDNDAFSYGYVR) the chain is Cytoplasmic. A helical membrane pass occupies residues 103 to 123 (AEVLAGFVNGLFLIFTAFFIF). The Lumenal segment spans residues 124–140 (SEGVERALAPPDVHHER). A helical transmembrane segment spans residues 141 to 161 (LLLVSILGFVVNLVGIFVFKH). Residues 161–218 (HGGHGHSHGSGHGHSHSLFNGALDQTHGHGDHCHSHELKHGAAHSHDHAHGHGHFHSH) are his-rich loop. The Cytoplasmic segment spans residues 162-236 (GGHGHSHGSG…TGPSRQILQG (75 aa)). A compositionally biased stretch (basic and acidic residues) spans 188 to 222 (GHGDHCHSHELKHGAAHSHDHAHGHGHFHSHDGPS). The disordered stretch occupies residues 188–226 (GHGDHCHSHELKHGAAHSHDHAHGHGHFHSHDGPSLKET). The chain crosses the membrane as a helical span at residues 237-257 (VFLHILADTLGSIGVIASAIM). At 258 to 262 (MQNFG) the chain is on the lumenal side. The helical transmembrane segment at 263–283 (LMIADPICSILIAMLIVISVI) threads the bilayer. The Cytoplasmic portion of the chain corresponds to 284–376 (PLLRESVGIL…LYVQIDFAAM (93 aa)).

It belongs to the cation diffusion facilitator (CDF) transporter (TC 2.A.4) family. SLC30A subfamily. In terms of assembly, homooligomer.

The protein resides in the golgi apparatus membrane. The protein localises to the cytoplasmic vesicle. It is found in the golgi apparatus. Its subcellular location is the trans-Golgi network. It localises to the sarcoplasmic reticulum. The protein resides in the mitochondrion. The enzyme catalyses Zn(2+)(in) = Zn(2+)(out). Its function is as follows. Zinc ion transporter mediating zinc entry from the cytosol into the lumen of organelles along the secretory pathway. By contributing to zinc ion homeostasis within the early secretory pathway, regulates the activation and folding of enzymes like alkaline phosphatases. The protein is Zinc transporter 7 (SLC30A7) of Bos taurus (Bovine).